Here is a 210-residue protein sequence, read N- to C-terminus: MDLHNIREDYSKRELSEGDCADNPIEQFERWLDEAVRAQVNEPTAVNVAAVDGRGRPNSRMVLLKEVNSEGFVFFTNYHSRKGRSLDAHPFAAMTFFWPELERQVRVEGRVERLAEKLSDEYFESRPYQSRLGAWASAQSEVIPNKAVLVAKAAAVGLKHPLHVPRPPHWGGYIVIPDLIEFWQGRPSRLHDRIQYRLLDGGWIRERLSP.

Substrate is bound by residues 7-10 (REDY) and Lys65. FMN-binding positions include 60-65 (RMVLLK), 75-76 (FT), Arg81, Lys82, and Gln104. Tyr122, Arg126, and Ser130 together coordinate substrate. Residues 139 to 140 (QS) and Trp183 contribute to the FMN site. Substrate is bound at residue 189 to 191 (RLH). Residue Arg193 participates in FMN binding.

Belongs to the pyridoxamine 5'-phosphate oxidase family. Homodimer. FMN is required as a cofactor.

The catalysed reaction is pyridoxamine 5'-phosphate + O2 + H2O = pyridoxal 5'-phosphate + H2O2 + NH4(+). The enzyme catalyses pyridoxine 5'-phosphate + O2 = pyridoxal 5'-phosphate + H2O2. It participates in cofactor metabolism; pyridoxal 5'-phosphate salvage; pyridoxal 5'-phosphate from pyridoxamine 5'-phosphate: step 1/1. Its pathway is cofactor metabolism; pyridoxal 5'-phosphate salvage; pyridoxal 5'-phosphate from pyridoxine 5'-phosphate: step 1/1. Catalyzes the oxidation of either pyridoxine 5'-phosphate (PNP) or pyridoxamine 5'-phosphate (PMP) into pyridoxal 5'-phosphate (PLP). The sequence is that of Pyridoxine/pyridoxamine 5'-phosphate oxidase from Neisseria meningitidis serogroup A / serotype 4A (strain DSM 15465 / Z2491).